The chain runs to 1299 residues: Tubulin polyglutamylase TTLL5 (1299 aa).

A TTL domain is found at 62–407; it reads RYHLSYKIVR…VCQDPAQRAS (346 aa). ATP contacts are provided by residues Lys180, 186 to 187, 208 to 211, and 221 to 223; these read RG, SRYI, and KFD. Arg186 provides a ligand contact to a protein. Position 247 (Arg247) interacts with L-glutamate. 268–269 provides a ligand contact to ATP; sequence TN. Tyr270, Ser271, and Lys293 together coordinate L-glutamate. Mg(2+) contacts are provided by Asp353, Glu366, and Asn368. The tract at residues 378 to 488 is c-MTBD region; it reads PLDLKIKASM…RGGFIRIFPT (111 aa). Position 384 (Lys384) interacts with L-glutamate. Disordered regions lie at residues 589 to 626, 832 to 853, 918 to 941, 1088 to 1130, and 1217 to 1275; these read EMNV…FLRE, GTHS…KGDH, SSVT…IPSA, RSSA…RSLQ, and SSAT…QLNG. Residues 597 to 617 show a composition bias toward acidic residues; sequence ESEEEEEVALDNEEEEQEASQ. A compositionally biased stretch (low complexity) spans 838 to 847; that stretch reads SKNNNSYSDS. Polar residues-rich tracts occupy residues 1104–1130, 1217–1230, and 1258–1275; these read SGPT…RSLQ, SSAT…TTLP, and ATSQ…QLNG.

The protein belongs to the tubulin--tyrosine ligase family. Interacts with the transcriptional coactivators NCOA1/SRC-1 and NCOA2/TIF2. Mg(2+) serves as cofactor.

Its subcellular location is the cell projection. It localises to the cilium. The protein localises to the cytoplasm. It is found in the cytoskeleton. The protein resides in the cilium basal body. Its subcellular location is the nucleus. The catalysed reaction is L-glutamyl-[protein] + L-glutamate + ATP = gamma-L-glutamyl-L-glutamyl-[protein] + ADP + phosphate + H(+). The enzyme catalyses (L-glutamyl)(n)-gamma-L-glutamyl-L-glutamyl-[protein] + L-glutamate + ATP = (L-glutamyl)(n+1)-gamma-L-glutamyl-L-glutamyl-[protein] + ADP + phosphate + H(+). Functionally, polyglutamylase which modifies tubulin, generating polyglutamate side chains on the gamma-carboxyl group of specific glutamate residues within the C-terminal tail of tubulin. Preferentially mediates ATP-dependent initiation step of the polyglutamylation reaction over the elongation step. Preferentially modifies the alpha-tubulin tail over a beta-tail. Required for CCSAP localization to both polyglutamylated spindle and cilia microtubules. Increases the effects of transcriptional coactivator NCOA2/TIF2 in glucocorticoid receptor-mediated repression and induction and in androgen receptor-mediated induction. The polypeptide is Tubulin polyglutamylase TTLL5 (TTLL5) (Pongo abelii (Sumatran orangutan)).